We begin with the raw amino-acid sequence, 313 residues long: Olfactory receptor 1G1 (313 aa).

Over 1 to 25 (MEGKNLTSISEFFLLGFSEQLEEQK) the chain is Extracellular. Asn-5 is a glycosylation site (N-linked (GlcNAc...) asparagine). The helical transmembrane segment at 26–49 (ALFGSFLFMYLVTVAGNLLIILVI) threads the bilayer. Over 50–57 (ITDTQLHT) the chain is Cytoplasmic. The helical transmembrane segment at 58-79 (PMYFFLANLSLADACFVSTTVP) threads the bilayer. Residues 80-100 (KMLANIQIQSQAISYSGCLLQ) are Extracellular-facing. A disulfide bridge links Cys-97 with Cys-189. Residues 101–120 (LYFFMLFVMLEAFLLAVMAY) traverse the membrane as a helical segment. The Cytoplasmic portion of the chain corresponds to 121-140 (DRYVAICHPLHYILIMSPGL). A helical transmembrane segment spans residues 141 to 158 (CVFLVSASWIMNALHSLL). The Extracellular segment spans residues 159-196 (HTLLMNSLSFCANHEIPHFFCDIDPLLSLSCTDPFTNE). Residues 197-219 (LVIFITGGLTGLVCVLCLIISYT) form a helical membrane-spanning segment. Residues 220-236 (NIFSTILKIPSAQGKRK) lie on the Cytoplasmic side of the membrane. The helical transmembrane segment at 237 to 259 (AFSTCGSHLSVVSLFFGTSFCVY) threads the bilayer. Residues 260–272 (FIPPSTRSAQKDT) are Extracellular-facing. A helical transmembrane segment spans residues 273-292 (VASVMYTVVTPMLNPFIYSL). The Cytoplasmic portion of the chain corresponds to 293 to 313 (RNQEIKSSLRKLIWVREIHSP).

Belongs to the G-protein coupled receptor 1 family.

It localises to the cell membrane. In terms of biological role, odorant receptor. This is Olfactory receptor 1G1 (OR1G1) from Gorilla gorilla gorilla (Western lowland gorilla).